The chain runs to 243 residues: Sugar fermentation stimulation protein homolog (243 aa).

Belongs to the SfsA family.

This Bdellovibrio bacteriovorus (strain ATCC 15356 / DSM 50701 / NCIMB 9529 / HD100) protein is Sugar fermentation stimulation protein homolog.